The chain runs to 308 residues: tRNA pseudouridine synthase B (308 aa).

Catalysis depends on Asp33, which acts as the Nucleophile.

It belongs to the pseudouridine synthase TruB family. Type 1 subfamily.

The enzyme catalyses uridine(55) in tRNA = pseudouridine(55) in tRNA. Responsible for synthesis of pseudouridine from uracil-55 in the psi GC loop of transfer RNAs. The protein is tRNA pseudouridine synthase B of Nitrosomonas europaea (strain ATCC 19718 / CIP 103999 / KCTC 2705 / NBRC 14298).